A 405-amino-acid polypeptide reads, in one-letter code: L-carnitine CoA-transferase (405 aa).

Lysine 97 and arginine 104 together coordinate CoA. The active-site Nucleophile is aspartate 169.

This sequence belongs to the CoA-transferase III family. CaiB subfamily. In terms of assembly, homodimer.

Its subcellular location is the cytoplasm. It carries out the reaction crotonobetainyl-CoA + (R)-carnitine = crotonobetaine + (R)-carnitinyl-CoA. The enzyme catalyses 4-(trimethylamino)butanoyl-CoA + (R)-carnitine = (R)-carnitinyl-CoA + 4-(trimethylamino)butanoate. It functions in the pathway amine and polyamine metabolism; carnitine metabolism. Its function is as follows. Catalyzes the reversible transfer of the CoA moiety from gamma-butyrobetainyl-CoA to L-carnitine to generate L-carnitinyl-CoA and gamma-butyrobetaine. Is also able to catalyze the reversible transfer of the CoA moiety from gamma-butyrobetainyl-CoA or L-carnitinyl-CoA to crotonobetaine to generate crotonobetainyl-CoA. This chain is L-carnitine CoA-transferase, found in Escherichia coli (strain K12 / MC4100 / BW2952).